The following is a 279-amino-acid chain: Nitrogenase vanadium-iron protein alpha chain (279 aa).

Residues cysteine 5, cysteine 31, and cysteine 94 each contribute to the [8Fe-7S] cluster site. A [7Fe-V-9S-C-homocitryl] cluster-binding site is contributed by cysteine 213.

This sequence belongs to the NifD/NifK/NifE/NifN family. In terms of assembly, hexamer of two alpha, two beta, and two delta chains. Requires [8Fe-7S] cluster as cofactor. [7Fe-V-9S-C-homocitryl] cluster is required as a cofactor.

It carries out the reaction N2 + 8 reduced [2Fe-2S]-[ferredoxin] + 16 ATP + 16 H2O = H2 + 8 oxidized [2Fe-2S]-[ferredoxin] + 2 NH4(+) + 16 ADP + 16 phosphate + 6 H(+). Functionally, this vanadium-iron protein is part of the nitrogenase complex that catalyzes the key enzymatic reactions in nitrogen fixation. The protein is Nitrogenase vanadium-iron protein alpha chain (vnfD) of Azotobacter salinestris.